The following is a 364-amino-acid chain: Phosphoserine aminotransferase (364 aa).

Residue arginine 41 coordinates L-glutamate. Pyridoxal 5'-phosphate contacts are provided by residues 75-76 (AS), tryptophan 100, threonine 155, and glutamine 198. Lysine 199 is subject to N6-(pyridoxal phosphate)lysine. 239–240 (NT) contacts pyridoxal 5'-phosphate.

This sequence belongs to the class-V pyridoxal-phosphate-dependent aminotransferase family. SerC subfamily. Homodimer. Pyridoxal 5'-phosphate is required as a cofactor.

It localises to the cytoplasm. It carries out the reaction O-phospho-L-serine + 2-oxoglutarate = 3-phosphooxypyruvate + L-glutamate. The catalysed reaction is 4-(phosphooxy)-L-threonine + 2-oxoglutarate = (R)-3-hydroxy-2-oxo-4-phosphooxybutanoate + L-glutamate. It participates in amino-acid biosynthesis; L-serine biosynthesis; L-serine from 3-phospho-D-glycerate: step 2/3. Its function is as follows. Catalyzes the reversible conversion of 3-phosphohydroxypyruvate to phosphoserine and of 3-hydroxy-2-oxo-4-phosphonooxybutanoate to phosphohydroxythreonine. The sequence is that of Phosphoserine aminotransferase from Streptococcus thermophilus (strain ATCC BAA-250 / LMG 18311).